We begin with the raw amino-acid sequence, 209 residues long: Octanoyltransferase (209 aa).

In terms of domain architecture, BPL/LPL catalytic spans 30 to 209 (DHEPEIIYLV…IQTEFNKIFK (180 aa)). Substrate is bound by residues 69 to 76 (RGGKFTFH), 143 to 145 (AIG), and 156 to 158 (GVA). Residue Cys-174 is the Acyl-thioester intermediate of the active site.

The protein belongs to the LipB family.

The protein localises to the cytoplasm. The catalysed reaction is octanoyl-[ACP] + L-lysyl-[protein] = N(6)-octanoyl-L-lysyl-[protein] + holo-[ACP] + H(+). It participates in protein modification; protein lipoylation via endogenous pathway; protein N(6)-(lipoyl)lysine from octanoyl-[acyl-carrier-protein]: step 1/2. Functionally, catalyzes the transfer of endogenously produced octanoic acid from octanoyl-acyl-carrier-protein onto the lipoyl domains of lipoate-dependent enzymes. Lipoyl-ACP can also act as a substrate although octanoyl-ACP is likely to be the physiological substrate. This is Octanoyltransferase from Rickettsia africae (strain ESF-5).